The sequence spans 317 residues: MASLNPSAKELHLLYVLTDSNLPTGGFVSSSGLESFAKHGFLSSQYSYTPKEFKDGVLGKKNMTGGLVDFARAEVSNYASTTGGFVMDGWTCVNDSRKASKAGNGIIEDEVQRVLQKIQALDKYHECTLLSHVGRRSSKAQGVAMLTLFSRGLSRPVGIDEYLNEDGGGPGSTDELGVKIVEGYKKMVILEKAPGHLAVCWGVITAALGLPVDRALHLHLFLHARSLLSSAVRLNIIGPYASSQLLLHPYRDIINQEVEKLSNCTTGIIEDKAEKCGEEEDLWAWTEDAEKGPATTWPLGEVLMGRHDIQHSRIFNS.

This sequence belongs to the UreF family. In terms of assembly, URE4, URE6 and URE7 may form a complex that acts as a GTP-hydrolysis-dependent molecular chaperone, activating the urease apoprotein URE1.

Urease accessory protein required for the maturation and activation of urease via the functional incorporation of the urease nickel metallocenter. Plays a role in host brain invasion. This chain is Urease accessory protein 6, found in Cryptococcus neoformans var. grubii serotype A (strain H99 / ATCC 208821 / CBS 10515 / FGSC 9487) (Filobasidiella neoformans var. grubii).